Here is a 326-residue protein sequence, read N- to C-terminus: MNHRQRGIALLMVLLILALMMVLASAMTERSARMYQQTATTLDNLQAKWYALGAETLAAALLQRDALDSPNQTHLAQNWAQQGRRFTVNDGEIYATITDAQACFNLNAINQRGDDESAAVPYPAQIFTRLLENLGSEPLRALQLTAALRDWVDDDRQPLLNGAEDEVYMAQSPGYLTGNQPLQDVSELRLLAGMDAALYQRLLPYVCALADETLQVNVNTLQPDRAALLAALFPAELTLVEARQLLQARAATGWSSVAAFLSQPALQKTDTAAARPWLAVHSERFIATFSVVMGNARYQQRSLLQKQGRTFGVVQRRYGIYWVADE.

Positions 1–7 (MNHRQRG) are cleaved as a propeptide — leader sequence. The helical transmembrane segment at 8–28 (IALLMVLLILALMMVLASAMT) threads the bilayer. The Periplasmic portion of the chain corresponds to 29–326 (ERSARMYQQT…RYGIYWVADE (298 aa)).

It belongs to the GSP K family. As to quaternary structure, type II secretion is composed of four main components: the outer membrane complex, the inner membrane complex, the cytoplasmic secretion ATPase and the periplasm-spanning pseudopilus. Interacts with core component PulG. Post-translationally, cleaved by prepilin peptidase.

The protein localises to the cell inner membrane. Component of the type II secretion system required for the energy-dependent secretion of extracellular factors such as proteases and toxins from the periplasm. Plays a role in pseudopilus assembly and seems to control its length. Interacts with the pseudopilus tip complex that is critical for the recognition and binding of secretion substrates. This is Type II secretion system protein K (pulK) from Klebsiella pneumoniae.